Consider the following 501-residue polypeptide: Aspartyl/glutamyl-tRNA(Asn/Gln) amidotransferase subunit B (501 aa).

Residues 271–299 (VQETRHYQETDGSTSKGRPKETAEDYRYF) form a disordered region. Positions 288–299 (RPKETAEDYRYF) are enriched in basic and acidic residues.

Belongs to the GatB/GatE family. GatB subfamily. In terms of assembly, heterotrimer of A, B and C subunits.

It catalyses the reaction L-glutamyl-tRNA(Gln) + L-glutamine + ATP + H2O = L-glutaminyl-tRNA(Gln) + L-glutamate + ADP + phosphate + H(+). The catalysed reaction is L-aspartyl-tRNA(Asn) + L-glutamine + ATP + H2O = L-asparaginyl-tRNA(Asn) + L-glutamate + ADP + phosphate + 2 H(+). Its function is as follows. Allows the formation of correctly charged Asn-tRNA(Asn) or Gln-tRNA(Gln) through the transamidation of misacylated Asp-tRNA(Asn) or Glu-tRNA(Gln) in organisms which lack either or both of asparaginyl-tRNA or glutaminyl-tRNA synthetases. The reaction takes place in the presence of glutamine and ATP through an activated phospho-Asp-tRNA(Asn) or phospho-Glu-tRNA(Gln). This is Aspartyl/glutamyl-tRNA(Asn/Gln) amidotransferase subunit B from Corynebacterium diphtheriae (strain ATCC 700971 / NCTC 13129 / Biotype gravis).